The following is a 66-amino-acid chain: Beta-mammal toxin Cv5 (66 aa).

An LCN-type CS-alpha/beta domain is found at 1–66; sequence KEGYIVNYYD…VWPLPKKKCN (66 aa). 4 cysteine pairs are disulfide-bonded: Cys-12–Cys-65, Cys-16–Cys-41, Cys-25–Cys-46, and Cys-29–Cys-48.

In terms of tissue distribution, expressed by the venom gland.

Its subcellular location is the secreted. Is susceptible to be neutralized by human antibodies scFvs 10FG2 and HV. Its function is as follows. Beta toxins bind voltage-independently at site-4 of sodium channels (Nav) and reduces peak current and shifts the voltage of activation toward more negative potentials thereby affecting sodium channel activation and promoting spontaneous and repetitive firing. This toxin is moderately toxic to mice. In Centruroides villegasi (Scorpion), this protein is Beta-mammal toxin Cv5.